The chain runs to 245 residues: 1-(5-phosphoribosyl)-5-[(5-phosphoribosylamino)methylideneamino] imidazole-4-carboxamide isomerase (245 aa).

The Proton acceptor role is filled by Asp7. Asp129 acts as the Proton donor in catalysis.

Belongs to the HisA/HisF family.

The protein localises to the cytoplasm. The catalysed reaction is 1-(5-phospho-beta-D-ribosyl)-5-[(5-phospho-beta-D-ribosylamino)methylideneamino]imidazole-4-carboxamide = 5-[(5-phospho-1-deoxy-D-ribulos-1-ylimino)methylamino]-1-(5-phospho-beta-D-ribosyl)imidazole-4-carboxamide. It participates in amino-acid biosynthesis; L-histidine biosynthesis; L-histidine from 5-phospho-alpha-D-ribose 1-diphosphate: step 4/9. The sequence is that of 1-(5-phosphoribosyl)-5-[(5-phosphoribosylamino)methylideneamino] imidazole-4-carboxamide isomerase from Escherichia coli (strain ATCC 8739 / DSM 1576 / NBRC 3972 / NCIMB 8545 / WDCM 00012 / Crooks).